A 372-amino-acid polypeptide reads, in one-letter code: Anhydro-N-acetylmuramic acid kinase (372 aa).

Residue 14–21 (GTSLDGVD) participates in ATP binding.

It belongs to the anhydro-N-acetylmuramic acid kinase family.

It catalyses the reaction 1,6-anhydro-N-acetyl-beta-muramate + ATP + H2O = N-acetyl-D-muramate 6-phosphate + ADP + H(+). The protein operates within amino-sugar metabolism; 1,6-anhydro-N-acetylmuramate degradation. Its pathway is cell wall biogenesis; peptidoglycan recycling. Functionally, catalyzes the specific phosphorylation of 1,6-anhydro-N-acetylmuramic acid (anhMurNAc) with the simultaneous cleavage of the 1,6-anhydro ring, generating MurNAc-6-P. Is required for the utilization of anhMurNAc either imported from the medium or derived from its own cell wall murein, and thus plays a role in cell wall recycling. The protein is Anhydro-N-acetylmuramic acid kinase of Photorhabdus laumondii subsp. laumondii (strain DSM 15139 / CIP 105565 / TT01) (Photorhabdus luminescens subsp. laumondii).